Consider the following 182-residue polypeptide: Peptidoglycan recognition protein 1 (182 aa).

The N-terminal stretch at 1–18 (MLFACALLALLGLATSCS) is a signal peptide. Cystine bridges form between C17/C141, C33/C78, and C54/C60. In terms of domain architecture, N-acetylmuramoyl-L-alanine amidase spans 39-167 (HPVRYVVISH…RDVQSTLSPG (129 aa)).

The protein belongs to the N-acetylmuramoyl-L-alanine amidase 2 family. In terms of assembly, homodimer; disulfide-linked. Interacts with HSPA1A; this interaction forms a cytotoxic complex that is released by lymphokine-activated killer cells. Interacts with HSPBP1; this interaction blocks the cytotoxic activity of the PGLYRP1-HSPA1A complex. In terms of tissue distribution, strongly expressed in spleen and lung. Also detected in brain and thymus. In the lung, expressed in the intraalveolar space, in the brain, expressed in the Purkinje cells of the cerebellum and in certain layers of neurons in the hippocampus. Also detected in cells filling the space within the intestinal villus.

It is found in the cytoplasm. The protein resides in the secreted. Innate immunity protein that plays several important functions in antimicrobial and antitumor defense systems. Acts as a pattern receptor that binds to murein peptidoglycans (PGN) of Gram-positive bacteria and thus provides bactericidal activity. Forms an equimolar complex with heat shock protein HSPA1A and induces programmed cell death through apoptosis and necroptosis in tumor cell lines by activating the TNFR1 receptor on the target cell membrane. In addition, acts in complex with the Ca(2+)-binding protein S100A4 as a chemoattractant able to induce lymphocyte movement. Mechanistically, this complex acts as a ligand of the chemotactic receptors CCR5 and CXCR3 which are present on the cells of the immune system. Also promotes the activation of lymphocytes that become able to kill virus-infected cells as well as tumor cells by modulating the spectrum of their target-cell specificity. Induction of cytotoxicity on monocyte surface requires interaction with TREM1 receptor. The chain is Peptidoglycan recognition protein 1 (Pglyrp1) from Mus musculus (Mouse).